The sequence spans 103 residues: Large ribosomal subunit protein uL23 (103 aa).

Belongs to the universal ribosomal protein uL23 family. Part of the 50S ribosomal subunit. Contacts protein L29, and trigger factor when it is bound to the ribosome.

Its function is as follows. One of the early assembly proteins it binds 23S rRNA. One of the proteins that surrounds the polypeptide exit tunnel on the outside of the ribosome. Forms the main docking site for trigger factor binding to the ribosome. The polypeptide is Large ribosomal subunit protein uL23 (Chlorobium phaeobacteroides (strain DSM 266 / SMG 266 / 2430)).